We begin with the raw amino-acid sequence, 198 residues long: Recombination protein RecR (198 aa).

Residues 57 to 72 (CSICGRLTDDDPCSIC) form a C4-type zinc finger. The Toprim domain occupies 80-175 (TTILVLEDSR…KVTRLARGLA (96 aa)).

The protein belongs to the RecR family.

Its function is as follows. May play a role in DNA repair. It seems to be involved in an RecBC-independent recombinational process of DNA repair. It may act with RecF and RecO. This Streptococcus pneumoniae serotype 2 (strain D39 / NCTC 7466) protein is Recombination protein RecR.